The primary structure comprises 198 residues: Protein GrpE (198 aa).

Residues 1–27 (MEERNEQVVEETKEAQTEEATIEKNSE) show a composition bias toward basic and acidic residues. Residues 1–39 (MEERNEQVVEETKEAQTEEATIEKNSEESVTEEATEETV) form a disordered region. The span at 29-39 (SVTEEATEETV) shows a compositional bias: acidic residues.

This sequence belongs to the GrpE family. In terms of assembly, homodimer.

The protein resides in the cytoplasm. Its function is as follows. Participates actively in the response to hyperosmotic and heat shock by preventing the aggregation of stress-denatured proteins, in association with DnaK and GrpE. It is the nucleotide exchange factor for DnaK and may function as a thermosensor. Unfolded proteins bind initially to DnaJ; upon interaction with the DnaJ-bound protein, DnaK hydrolyzes its bound ATP, resulting in the formation of a stable complex. GrpE releases ADP from DnaK; ATP binding to DnaK triggers the release of the substrate protein, thus completing the reaction cycle. Several rounds of ATP-dependent interactions between DnaJ, DnaK and GrpE are required for fully efficient folding. The sequence is that of Protein GrpE from Bacillus cytotoxicus (strain DSM 22905 / CIP 110041 / 391-98 / NVH 391-98).